We begin with the raw amino-acid sequence, 315 residues long: Zinc finger protein 691 (315 aa).

Over residues 1-10 the composition is skewed to polar residues; the sequence is MSLCSPTHSA. Residues 1–90 are disordered; that stretch reads MSLCSPTHSA…QETHPKKPWQ (90 aa). Positions 33–58 are enriched in basic and acidic residues; it reads GSEKEQSPEPHLPEEGEGGKPWRVDD. Serine 39, serine 75, and serine 77 each carry phosphoserine. Residue lysine 113 forms a Glycyl lysine isopeptide (Lys-Gly) (interchain with G-Cter in SUMO2) linkage. C2H2-type zinc fingers lie at residues 115–137, 143–165, 171–193, 199–221, 227–249, 255–277, and 283–305; these read FICA…QRIH, YKCS…ERIH, YKCP…QQDH, YRCD…HRTH, YICC…HRTH, YECT…QRTH, and YRCT…QKTH.

The protein belongs to the krueppel C2H2-type zinc-finger protein family.

The protein localises to the nucleus. Its function is as follows. May be involved in transcriptional regulation. The polypeptide is Zinc finger protein 691 (ZNF691) (Homo sapiens (Human)).